Consider the following 553-residue polypeptide: Solute carrier family 45 member 3 (553 aa).

Transmembrane regions (helical) follow at residues L19–V39, F52–G72, F88–W108, L120–F140, Y161–I181, C198–A218, F275–F295, M323–D343, A353–H373, A382–L402, and A522–V542.

Belongs to the glycoside-pentoside-hexuronide (GPH) cation symporter transporter (TC 2.A.2) family. As to expression, prostate specific. Expressed in all prostatic glandular cells. Expressed both in normal and cancerous prostates.

The protein localises to the membrane. It catalyses the reaction sucrose(out) + H(+)(out) = sucrose(in) + H(+)(in). Functionally, proton-associated sucrose transporter. May be able to transport also glucose and fructose. This chain is Solute carrier family 45 member 3, found in Homo sapiens (Human).